The chain runs to 134 residues: Translation initiation factor 2 subunit beta (134 aa).

It belongs to the eIF-2-beta/eIF-5 family. Heterotrimer composed of an alpha, a beta and a gamma chain.

In terms of biological role, eIF-2 functions in the early steps of protein synthesis by forming a ternary complex with GTP and initiator tRNA. The polypeptide is Translation initiation factor 2 subunit beta (Pyrobaculum neutrophilum (strain DSM 2338 / JCM 9278 / NBRC 100436 / V24Sta) (Thermoproteus neutrophilus)).